Consider the following 391-residue polypeptide: Ectodysplasin-A (391 aa).

At Met1 to Leu41 the chain is on the cytoplasmic side. A helical; Signal-anchor for type II membrane protein membrane pass occupies residues Leu42–Leu62. Residues Glu63–Ser391 lie on the Extracellular side of the membrane. 2 disordered regions span residues Gly73–Ser127 and Tyr146–Glu245. Residues Thr86 to Pro101 show a composition bias toward low complexity. Positions Ile102 to Gln113 are enriched in polar residues. The Collagen-like domain maps to Gly180–Pro229. 2 stretches are compositionally biased toward pro residues: residues Pro181–Pro203 and Pro216–Pro228. A THD domain is found at Ala249–Leu385. Asn313 carries an N-linked (GlcNAc...) asparagine glycan. Cys332 and Cys346 are oxidised to a cystine. A glycan (N-linked (GlcNAc...) asparagine) is linked at Asn372.

Belongs to the tumor necrosis factor family. As to quaternary structure, homotrimer. The homotrimers may then dimerize and form higher-order oligomers. N-glycosylated. Post-translationally, processing by furin produces a secreted form. As to expression, not abundant; expressed in specific cell types of ectodermal (but not mesodermal) origin of keratinocytes, hair follicles, sweat glands. Also in adult heart, liver, muscle, pancreas, prostate, fetal liver, uterus, small intestine and umbilical cord.

It is found in the cell membrane. It localises to the secreted. Cytokine which is involved in epithelial-mesenchymal signaling during morphogenesis of ectodermal organs. Functions as a ligand activating the DEATH-domain containing receptors EDAR and EDA2R. May also play a role in cell adhesion. Its function is as follows. Binds only to the receptor EDAR, while isoform 3 binds exclusively to the receptor EDA2R. Functionally, binds only to the receptor EDA2R. The chain is Ectodysplasin-A (EDA) from Homo sapiens (Human).